The following is a 265-amino-acid chain: Selenoprotein Pb (265 aa).

The N-terminal stretch at 1-18 (MQALWPLLLSALPALLGA) is a signal peptide. The N-linked (GlcNAc...) asparagine glycan is linked to N28. Residue U64 is a non-standard amino acid, selenocysteine. Residues N88, N178, N184, and N207 are each glycosylated (N-linked (GlcNAc...) asparagine). Residues 188-265 (SESSDSTKND…SHQEHVHNHR (78 aa)) form a disordered region. Over residues 201-211 (ENNQRPNSTEP) the composition is skewed to polar residues. The span at 215–231 (AHHHHHQQHEPHHHHHN) shows a compositional bias: basic residues. Over residues 239–265 (KSGDSDVTGKPKEPPHHSHQEHVHNHR) the composition is skewed to basic and acidic residues.

Its subcellular location is the secreted. In terms of biological role, might be responsible for some of the extracellular antioxidant defense properties of selenium. This chain is Selenoprotein Pb (sepp1b), found in Danio rerio (Zebrafish).